The following is a 312-amino-acid chain: Small ribosomal subunit protein uS2 (312 aa).

This sequence belongs to the universal ribosomal protein uS2 family. As to quaternary structure, component of the small ribosomal subunit. Mature ribosomes consist of a small (40S) and a large (60S) subunit. The 40S subunit contains about 33 different proteins and 1 molecule of RNA (18S). The 60S subunit contains about 49 different proteins and 3 molecules of RNA (25S, 5.8S and 5S). Interacts with ribosomal protein S21.

The protein localises to the cytoplasm. Required for the assembly and/or stability of the 40S ribosomal subunit. Required for the processing of the 20S rRNA-precursor to mature 18S rRNA in a late step of the maturation of 40S ribosomal subunits. The sequence is that of Small ribosomal subunit protein uS2 from Vitis vinifera (Grape).